Consider the following 130-residue polypeptide: Iron-sulfur cluster insertion protein ErpA (130 aa).

The iron-sulfur cluster site is built by cysteine 58, cysteine 122, and cysteine 124.

It belongs to the HesB/IscA family. As to quaternary structure, homodimer. The cofactor is iron-sulfur cluster.

Required for insertion of 4Fe-4S clusters for at least IspG. This chain is Iron-sulfur cluster insertion protein ErpA, found in Stenotrophomonas maltophilia (strain K279a).